The chain runs to 2388 residues: Spectrin beta chain, non-erythrocytic 2 (2388 aa).

Serine 2 carries the N-acetylserine modification. An actin-binding region spans residues 2–278 (SSTLSPTDFD…IITYVATYYH (277 aa)). Phosphoserine occurs at positions 6 and 31. Calponin-homology (CH) domains are found at residues 57 to 161 (AVQK…LRFQ) and 176 to 281 (KSAK…HYFS). Spectrin repeat units lie at residues 306–414 (LVEK…LALR), 427–527 (AARF…RERL), 532–639 (ELQK…RLEE), 642–744 (RLWR…QRLA), 749–849 (LYQF…RALE), and 856–954 (TMLS…KAAL). The residue at position 959 (serine 959) is a Phosphoserine. Spectrin repeat units follow at residues 960–1063 (IQNY…SLGE), 1066–1169 (RLQD…GRLA), 1174–1266 (FQGF…NQEA), 1279–1379 (EQQH…ARSL), 1384–1485 (RAEL…RRLQ), 1489–1586 (EQHQ…RLEE), 1589–1692 (RAQQ…RLQE), 1696–1797 (LCQL…GQVL), 1801–1904 (YELQ…QLLL), 1910–2010 (FRFF…DWLQ), and 2017–2078 (VFGR…LTAL). The residue at position 1073 (serine 1073) is a Phosphoserine. Position 1574 is a phosphoserine (serine 1574). Residues 2080–2096 (ERENEQKRKREEEERRK) are compositionally biased toward basic and acidic residues. Disordered stretches follow at residues 2080–2112 (EREN…EGSL) and 2124–2207 (DGTQ…HVAT). Residues 2124–2163 (DGTQSKLPPSTQAPSINGVCTDTESSQPLLEQQRLEQSNV) are compositionally biased toward polar residues. Phosphoserine is present on residues serine 2169 and serine 2199. A PH domain is found at 2218-2328 (QEQMEGTLCR…WLRVVNAAIA (111 aa)). Positions 2333–2388 (ASGEPEEPVVPSASRGLTRAMTMPPVSQPEGSIVLRSKDGREREREKRFSFFKKNK) are disordered. Threonine 2354 bears the Phosphothreonine mark. Serine 2359 is modified (phosphoserine). Residues 2368 to 2381 (RSKDGREREREKRF) show a composition bias toward basic and acidic residues.

The protein belongs to the spectrin family. In terms of tissue distribution, abundantly transcribed in the brain. Neurons are the predominant cell-type to express the gene. Found abundantly in Purkinje cells.

It localises to the cytoplasm. Its subcellular location is the cytoskeleton. It is found in the cell cortex. Probably plays an important role in neuronal membrane skeleton. The protein is Spectrin beta chain, non-erythrocytic 2 (Sptbn2) of Rattus norvegicus (Rat).